The sequence spans 672 residues: MEHHSHQEHENHTSHGNHEHHHHGNFKSKFFISLIFAIPIIILSPMMGVKLPFQISFTGSDWIVLILATILFFYGGKPFLSGAKDEISTKKPGMMTLVALGISVAYIYSLYAFYMNNFSGSSTHTMDFFWELATLILIMLLGHWIEMNAVGNAGNALKKMAELLPNTAVKLIDNNQREEVKISDIHIDDIVEVRAGESIPTDGIIVRGETSIDESLVTGESKKVHKTHNDDVIGGSINGSGTVQVKVTATGENGYLSQVMGLVNQAQNDKSKAELLSDKVAGYLFYFAVSIGLISFIVWMLIQNNVDFALERLVTVLVIACPHALGLAIPLVTARSTSIGAHNGLIIKNRESVEIAQHIDYIMMDKTGTLTEGNFSVNHYESFTDELNNEEILSLFASLESNSNHPLATGIVDFAKGKNISYATPQEVNNIPGVGLEGTVDNKKLKIVNVSYLDKSNFDYNKEQFTNLAQQGNSISYLIHDRQVIGIIAQGDKIKESSKQMVSDLLSRNITPVMLTGDNKEVAQTVAEELGISDVHAQLMPEDKESIIQDYQSNGSKIMMVGDGINDAPSLIRADIGMAIGAGTDVAIESGDVILVKSNPSDIINFLSLSKNTMKKMVQNLWWGAGYNVIAVPLAAGILASIGLILSPAVGAILMSLSTIIVAINAFTLKLK.

Residues M1–N17 are compositionally biased toward basic and acidic residues. The disordered stretch occupies residues M1–H22. The next 6 helical transmembrane spans lie at F30–K50, I55–G75, G93–F113, T125–I145, G282–I302, and L313–T333. D365 functions as the 4-aspartylphosphate intermediate in the catalytic mechanism. Mg(2+) is bound by residues D563 and D567. 2 helical membrane passes run L621 to G643 and S647 to L669.

This sequence belongs to the cation transport ATPase (P-type) (TC 3.A.3) family. Type IB subfamily.

The protein resides in the cell membrane. It catalyses the reaction Cu(+)(in) + ATP + H2O = Cu(+)(out) + ADP + phosphate + H(+). Its function is as follows. Involved in copper transport. This is Probable copper-transporting P-type ATPase B (copB) from Staphylococcus aureus.